The following is a 415-amino-acid chain: Serine--tRNA ligase (415 aa).

231–233 is an L-serine binding site; sequence TAE. 262 to 264 is a binding site for ATP; sequence RSE. Position 285 (E285) interacts with L-serine. Residue 349 to 352 coordinates ATP; sequence EISS. Position 383 (S383) interacts with L-serine.

This sequence belongs to the class-II aminoacyl-tRNA synthetase family. Type-1 seryl-tRNA synthetase subfamily. Homodimer. The tRNA molecule binds across the dimer.

It is found in the cytoplasm. The catalysed reaction is tRNA(Ser) + L-serine + ATP = L-seryl-tRNA(Ser) + AMP + diphosphate + H(+). It catalyses the reaction tRNA(Sec) + L-serine + ATP = L-seryl-tRNA(Sec) + AMP + diphosphate + H(+). It participates in aminoacyl-tRNA biosynthesis; selenocysteinyl-tRNA(Sec) biosynthesis; L-seryl-tRNA(Sec) from L-serine and tRNA(Sec): step 1/1. In terms of biological role, catalyzes the attachment of serine to tRNA(Ser). Is also able to aminoacylate tRNA(Sec) with serine, to form the misacylated tRNA L-seryl-tRNA(Sec), which will be further converted into selenocysteinyl-tRNA(Sec). In Helicobacter pylori (strain Shi470), this protein is Serine--tRNA ligase.